We begin with the raw amino-acid sequence, 115 residues long: Cholecystokinin (115 aa).

Positions 1–20 are cleaved as a signal peptide; it reads MKSGVCLCVVMAVLAAGALA. Residues 21 to 70 constitute a propeptide that is removed on maturation; sequence QPVVPAEATDPVEQRAQEAPRRQLRAVLRTDGEPRARLGALLARYIQQVR. Y97 carries the post-translational modification Sulfotyrosine. At F103 the chain carries Phenylalanine amide. Residues 107–115 constitute a propeptide that is removed on maturation; that stretch reads SAEDYEYPS. Sulfotyrosine occurs at positions 111 and 113.

The protein belongs to the gastrin/cholecystokinin family. As to quaternary structure, binds to CCK-A receptors in the pancreas and CCK-B receptors in the brain. In terms of processing, the precursor is cleaved by proteases to produce a number of active cholecystokinins. Expressed and secreted by discrete enteroendocrine cells that reside as single cells scattered among enterocytes in the mucosa of the small intestine. Released into the blood following ingestion of a meal.

The protein localises to the secreted. Its function is as follows. This peptide hormone induces gall bladder contraction and the release of pancreatic enzymes in the gut. Its function in the brain is not clear. Binding to CCK-A receptors stimulates amylase release from the pancreas, binding to CCK-B receptors stimulates gastric acid secretion. The protein is Cholecystokinin (Cck) of Mus musculus (Mouse).